The chain runs to 289 residues: CRISPR-associated endoribonuclease Cas6 2 (289 aa).

This sequence belongs to the CRISPR-associated endoribonuclease Cas6 family. As to quaternary structure, possibly part of the aCascade ribonucleoprotein complex. It depends on Mg(2+) as a cofactor.

Functionally, CRISPR (clustered regularly interspaced short palindromic repeat) is an adaptive immune system that provides protection against mobile genetic elements (viruses, transposable elements and conjugative plasmids). CRISPR clusters contain sequences complementary to antecedent mobile elements and target invading nucleic acids. CRISPR clusters are transcribed and processed into CRISPR RNA (crRNA). Functions as a ssRNA-specific endoribonuclease, generating an 8 base-long tag known as the 5' handle. The chain is CRISPR-associated endoribonuclease Cas6 2 (cas6b) from Saccharolobus solfataricus (strain ATCC 35092 / DSM 1617 / JCM 11322 / P2) (Sulfolobus solfataricus).